The following is a 510-amino-acid chain: Histidine ammonia-lyase (510 aa).

Residues 143 to 145 (ASG) constitute a cross-link (5-imidazolinone (Ala-Gly)). 2,3-didehydroalanine (Ser) is present on Ser144.

This sequence belongs to the PAL/histidase family. In terms of processing, contains an active site 4-methylidene-imidazol-5-one (MIO), which is formed autocatalytically by cyclization and dehydration of residues Ala-Ser-Gly.

Its subcellular location is the cytoplasm. It catalyses the reaction L-histidine = trans-urocanate + NH4(+). It participates in amino-acid degradation; L-histidine degradation into L-glutamate; N-formimidoyl-L-glutamate from L-histidine: step 1/3. This chain is Histidine ammonia-lyase, found in Yersinia pseudotuberculosis serotype I (strain IP32953).